Reading from the N-terminus, the 357-residue chain is Iron deficiency-induced protein A (357 aa).

A signal peptide (tat-type signal) is located at residues 1-36 (MSESMFSRRDFLLGGTALAGTLLLDSFGDWRRRAEA). Residues H48, Y49, Y182, Y238, and Y239 each contribute to the Fe cation site.

It belongs to the bacterial solute-binding protein 1 family. Predicted to be exported by the Tat system. The position of the signal peptide cleavage has not been experimentally proven.

It is found in the cellular thylakoid membrane. Plays an important role in protecting the acceptor side of photosystem II (PSII) against oxidative damage, especially under iron-limiting growth conditions. Its function is as follows. May also be part of a periplasmic ABC transporter complex involved in iron import. The chain is Iron deficiency-induced protein A (idiA) from Synechococcus elongatus (strain ATCC 33912 / PCC 7942 / FACHB-805) (Anacystis nidulans R2).